The primary structure comprises 837 residues: VNCSVDCQLQVFNWSCPSTPSTPPPSTPTTPTSSQTTTPSTPSTTSSKSTPSTPQSTSSKSTPSTPPKTTLPGCLDFDPPRQVNETWWLCNCTMAICKYDNVVEIVELECNPPPMPTCSNGLKPVRVPDPDGCCWHWECDCYCTGWGDPHFVTFDGLYYSYQGNCTYVLVEEITPTVDNFGVYIDNYHCDANDKVSCPRTLIVHHETQEVLIKTVHMMPIEVEVQVNKQLVALPYKKYGLEVYQSGINFVVDIPRLGAQVSYNGLSFSIRLPYHLFGNNTKGQCGTCTNNTADDCILPSGEIISNCEVAADEWLVNDPSKPHCPHKGLTTKRPAITTPGPFPENCTVSPVCQLIMDSLFSQCHPFVPPKHYYEACLFDSCFVAGSGMECASVQAYAALCAQEGVCIDWRNHTQGACAVTCPAHRQYQACGPSEEPTCQSSSPKNSTLLVEGCFCPEGTTKFAPGYDVCVKICGCVGPDNVPREFGEHFEFDCKDCVCLEGGSGIVCQPKKCARGNLTTCEEDGTYLVVEADPDDKCCNTTSCKCDPKRCKAERPSCLLGFEVKSEHVPGKCCPVYSCVPKGVCVHENAEYQPGSPVYSNKCQDCVCTDSMDNSTQLNVISCTHVPCNISCSSGFELVEVPGECCKKCQQTHCIIKRPEQQYIILKPGEIQKNPNDRCTFFSCMKINNQLISSVSNITCPDFDPSDCVPGSITYMPNGCCKTCIHNPNNTVPCSAIPVMKEISYNGCAKNISMNFCAGSCGTFAMYSAQAQDLDHGCSCCREERTSVRMVSLDCPDGSKLSHSYTHIESCLCQGTVCELPQAQQSRTRRSSPRLLGRK.

4 tandem repeats follow at residues 17 to 27, 28 to 38, 39 to 50, and 51 to 62. The tract at residues 17-70 is 5 X 11 AA approximate tandem repeats; sequence PSTPSTPPPSTPTTPTSSQTTTPSTPSTTSSKSTPSTPQSTSSKSTPSTPPKTT. The tract at residues 17–75 is disordered; the sequence is PSTPSTPPPSTPTTPTSSQTTTPSTPSTTSSKSTPSTPQSTSSKSTPSTPPKTTLPGCL. Residues 29 to 70 are compositionally biased toward low complexity; sequence TTPTSSQTTTPSTPSTTSSKSTPSTPQSTSSKSTPSTPPKTT. One copy of the 5; truncated repeat lies at 63 to 70; that stretch reads PSTPPKTT. Asn-91 and Asn-164 each carry an N-linked (GlcNAc...) asparagine glycan. One can recognise a VWFD domain in the interval 141-324; that stretch reads CYCTGWGDPH…VNDPSKPHCP (184 aa). Intrachain disulfides connect Cys-143-Cys-284, Cys-165-Cys-323, and Cys-189-Cys-197. The interval 149–837 is probably important for disulfide-bond mediated mucin polymerization (link domain); sequence PHFVTFDGLY…RSSPRLLGRK (689 aa). Asn-278, Asn-289, Asn-344, Asn-410, Asn-444, Asn-515, Asn-538, Asn-612, Asn-627, Asn-695, Asn-727, and Asn-749 each carry an N-linked (GlcNAc...) asparagine glycan. 2 consecutive VWFC domains span residues 472–543 and 581–648; these read CGCV…TSCK and GVCV…KKCQ. 4 cysteine pairs are disulfide-bonded: Cys-732–Cys-779, Cys-746–Cys-793, Cys-755–Cys-809, and Cys-759–Cys-811. The CTCK domain occupies 732-817; the sequence is CSAIPVMKEI…SCLCQGTVCE (86 aa).

In terms of assembly, multimeric. As to expression, coats the epithelia of the intestines.

The protein localises to the secreted. The chain is Intestinal mucin-like protein from Rattus norvegicus (Rat).